We begin with the raw amino-acid sequence, 139 residues long: UPF0216 protein MJ1224 (139 aa).

Belongs to the UPF0216 family.

The chain is UPF0216 protein MJ1224 from Methanocaldococcus jannaschii (strain ATCC 43067 / DSM 2661 / JAL-1 / JCM 10045 / NBRC 100440) (Methanococcus jannaschii).